The primary structure comprises 272 residues: Putative phosphoenolpyruvate synthase regulatory protein (272 aa).

Residue 152–159 (GVSRSGKT) participates in ADP binding.

This sequence belongs to the pyruvate, phosphate/water dikinase regulatory protein family. PSRP subfamily.

It catalyses the reaction [pyruvate, water dikinase] + ADP = [pyruvate, water dikinase]-phosphate + AMP + H(+). The catalysed reaction is [pyruvate, water dikinase]-phosphate + phosphate + H(+) = [pyruvate, water dikinase] + diphosphate. Its function is as follows. Bifunctional serine/threonine kinase and phosphorylase involved in the regulation of the phosphoenolpyruvate synthase (PEPS) by catalyzing its phosphorylation/dephosphorylation. The protein is Putative phosphoenolpyruvate synthase regulatory protein of Hahella chejuensis (strain KCTC 2396).